Here is a 384-residue protein sequence, read N- to C-terminus: GDP-mannose transporter (384 aa).

At 1 to 40 (MVEDKKTDDYTIEMDKMDQGSKNFEAAAPPPQPRTPPAGS) the chain is on the cytoplasmic side. A helical membrane pass occupies residues 41-61 (ISNNPILPVLAYCGSSILMTV). The Lumenal segment spans residues 62 to 69 (MNKYVLSG). Residues 70 to 90 (LDFNLNFFLLCVQSIVCIVAI) traverse the membrane as a helical segment. The Cytoplasmic portion of the chain corresponds to 91-110 (QTCKSCGLITYRDFSADEAR). Residues 111–127 (KWFPITLLLIGMIYTGS) form a helical membrane-spanning segment. The Lumenal segment spans residues 128–134 (KALQFLS). Residues 135-151 (IPVYTIFKNLTIILIAY) traverse the membrane as a helical segment. The Cytoplasmic portion of the chain corresponds to 152 to 160 (GEVLWFGGS). Residues 161–182 (VTGLTLFSFGLMVLSSIIAAWA) traverse the membrane as a helical segment. At 183–200 (DIKHAVESTGDATAKVST) the chain is on the lumenal side. A helical transmembrane segment spans residues 201–221 (LNAGYIWMLVNCLCTSSYVLG). Topologically, residues 222–236 (MRKRIKLTNFKDFDT) are cytoplasmic. Residues 237 to 257 (LAMFYNNLLSIPVLIVLTGLM) traverse the membrane as a helical segment. At 258-276 (EDWSSANITRNFPPADRNN) the chain is on the lumenal side. N-linked (GlcNAc...) asparagine glycosylation occurs at N264. The chain crosses the membrane as a helical span at residues 277-297 (IIFAMILSGLSSVFISYTSAW). Residues 298–305 (CVRVTSST) lie on the Cytoplasmic side of the membrane. A helical membrane pass occupies residues 306-326 (TYSMVGALNKLPIALSGLIFF). Topologically, residues 327–329 (DAP) are lumenal. Residues 330–350 (VTFPSVSAIVVGFVSGIVYAV) form a helical membrane-spanning segment. Topologically, residues 351–384 (AKIKQNAKPKTGVLPMSNPPVSASSQSMRDSLRS) are cytoplasmic. The disordered stretch occupies residues 364 to 384 (LPMSNPPVSASSQSMRDSLRS). The segment covering 369–384 (PPVSASSQSMRDSLRS) has biased composition (polar residues).

This sequence belongs to the TPT transporter family. SLC35D subfamily. As to quaternary structure, homooligomer.

Its subcellular location is the golgi apparatus membrane. The protein localises to the cytoplasmic vesicle membrane. It is found in the endoplasmic reticulum membrane. Functionally, involved in the import of GDP-mannose from the cytoplasm into the Golgi lumen. This chain is GDP-mannose transporter (gmt1), found in Aspergillus terreus (strain NIH 2624 / FGSC A1156).